We begin with the raw amino-acid sequence, 58 residues long: uncharacterized protein (58 aa).

It is found in the plastid. The protein localises to the chloroplast. This is an uncharacterized protein from Pyropia yezoensis (Susabi-nori).